The chain runs to 119 residues: Basic phospholipase A2 (119 aa).

Intrachain disulfides connect Cys11-Cys72, Cys27-Cys118, Cys29-Cys45, Cys44-Cys100, Cys51-Cys93, Cys61-Cys86, and Cys79-Cys91. Residues Tyr28, Gly30, and Gly32 each contribute to the Ca(2+) site. The active site involves His48. Asp49 contacts Ca(2+). An N-linked (GlcNAc...) asparagine glycan is attached at Asn82. The active site involves Asp94.

It belongs to the phospholipase A2 family. Group I subfamily. D49 sub-subfamily. Ca(2+) is required as a cofactor. Expressed by the venom gland.

Its subcellular location is the secreted. The catalysed reaction is a 1,2-diacyl-sn-glycero-3-phosphocholine + H2O = a 1-acyl-sn-glycero-3-phosphocholine + a fatty acid + H(+). In terms of biological role, snake venom phospholipase A2 (PLA2) that shows weak myotoxicity and induces edema in mice. Shows no cytotoxicity in vitro. Has an anticoagulant effect in vitro. PLA2 catalyzes the calcium-dependent hydrolysis of the 2-acyl groups in 3-sn-phosphoglycerides. The sequence is that of Basic phospholipase A2 from Micrurus mipartitus (Red-tailed coral snake).